The primary structure comprises 233 residues: Large ribosomal subunit protein uL1 (233 aa).

The protein belongs to the universal ribosomal protein uL1 family. As to quaternary structure, part of the 50S ribosomal subunit.

In terms of biological role, binds directly to 23S rRNA. The L1 stalk is quite mobile in the ribosome, and is involved in E site tRNA release. Protein L1 is also a translational repressor protein, it controls the translation of the L11 operon by binding to its mRNA. In Pelobacter propionicus (strain DSM 2379 / NBRC 103807 / OttBd1), this protein is Large ribosomal subunit protein uL1.